The sequence spans 224 residues: Transposase for insertion sequence-like element IS431mec (224 aa).

The segment at residues 33 to 52 (EILRERGVNVHHSTVYRWVQ) is a DNA-binding region (H-T-H motif). Residues 73 to 222 (WRIDETYIKI…SPCHEISIML (150 aa)) enclose the Integrase catalytic domain.

In terms of biological role, involved in the transposition of the insertion sequence. This is Transposase for insertion sequence-like element IS431mec (tnp) from Staphylococcus aureus (strain NCTC 8325 / PS 47).